Consider the following 86-residue polypeptide: Bradykinin-potentiating peptide 25.12 (86 aa).

An N-terminal signal peptide occupies residues 1–22; it reads MNKRVLLVIFFVTLLIADEVNS. Residues 67–86 form a disordered region; the sequence is APAAAAAPEEPPVEQRRRRR.

This sequence belongs to the non-disulfide-bridged peptide (NDBP) superfamily. Long chain multifunctional peptide (group 2) family. In terms of tissue distribution, expressed by the venom gland.

Its subcellular location is the secreted. Functionally, inhibits angiotensin-converting enzyme (ACE), but does not serve as substrate for the enzyme. Potentiates bradykinin (BK) on the isolated guinea pig ileum as well as the isolated rat uterus for contraction. Also potentiates in vivo the depressor effect of BK on arterial blood pressure in the normotensive anesthetized rat. The polypeptide is Bradykinin-potentiating peptide 25.12 (Lychas mucronatus (Chinese swimming scorpion)).